The following is a 367-amino-acid chain: Serine/threonine-protein kinase Sgk2 (367 aa).

A disordered region spans residues 1–28 (MASSPVGVPSPQPSRANGNINLGPSANP). At Ser10 the chain carries Phosphoserine. Residues 15-28 (RANGNINLGPSANP) are compositionally biased toward polar residues. Residues 35–292 (FDFLKVIGKG…FLDIKNHMFF (258 aa)) enclose the Protein kinase domain. Residues 41-49 (IGKGNYGKV) and Lys64 contribute to the ATP site. A Nuclear localization signal motif is present at residues 68–77 (KKSILKNKEQ). Asp159 functions as the Proton acceptor in the catalytic mechanism. Thr193 is modified (phosphothreonine; by PDPK1). The AGC-kinase C-terminal domain occupies 293–367 (SPINWDDLYH…AQDDDDILDS (75 aa)). Residues Ser334 and Ser356 each carry the phosphoserine modification. Phosphotyrosine is present on Tyr357.

Belongs to the protein kinase superfamily. AGC Ser/Thr protein kinase family. Activated by phosphorylation on Ser-356 by an unknown kinase (may be mTORC2 but not confirmed), transforming it into a substrate for PDPK1 which then phosphorylates it on Thr-193. In terms of tissue distribution, expressed in the proximal tubule and thick ascending limb of the loop of Henle (TALH).

Its subcellular location is the cytoplasm. The protein resides in the nucleus. The enzyme catalyses L-seryl-[protein] + ATP = O-phospho-L-seryl-[protein] + ADP + H(+). The catalysed reaction is L-threonyl-[protein] + ATP = O-phospho-L-threonyl-[protein] + ADP + H(+). With respect to regulation, two specific sites, one in the kinase domain (Thr-193) and the other in the C-terminal regulatory region (Ser-356), need to be phosphorylated for its full activation. In terms of biological role, serine/threonine-protein kinase which is involved in the regulation of a wide variety of ion channels, membrane transporters, cell growth, survival and proliferation. Up-regulates Na(+) channels: SCNN1A/ENAC, K(+) channels: KCNA3/Kv1.3, KCNE1 and KCNQ1, amino acid transporter: SLC6A19, glutamate transporter: SLC1A6/EAAT4, glutamate receptors: GRIA1/GLUR1 and GRIK2/GLUR6, Na(+)/H(+) exchanger: SLC9A3/NHE3, and the Na(+)/K(+) ATPase. The chain is Serine/threonine-protein kinase Sgk2 (Sgk2) from Rattus norvegicus (Rat).